The sequence spans 92 residues: UPF0223 protein EF_2462 (92 aa).

Belongs to the UPF0223 family.

This Enterococcus faecalis (strain ATCC 700802 / V583) protein is UPF0223 protein EF_2462.